Consider the following 566-residue polypeptide: MDMLEMALNIAKDIEKSVKPLIGWEKSNEVVKIGADGTPTKRIDLIAENVAINSIEKVCSAILISEEIGFKRIGKNKPEYVIVLDPVDGTYNSLKDIPFYSAAVAIGRIDKFADNLEELINNLKMKDLEVGVVRNIATGDTYYAEKGKGAHFLRKGEKKSISISNSSNLKDSSIGLFAHDISIDTLKFIKDRRFRRIRLFGSIALEMCYVAKGALDAFINVNETTRLCDIAAGYVIIKEAGGIVTDKNGQEVNLDLDVNSKVSVICSNEMLHKKLVGIFGNRWRIKPTNFGIISRIDNEESIEVADNVIKYLDSKGIKYELDSSTYNALKNRLTKKCDIISNIEEISHMISIGGDGTVLRASKMIEGNEIPMVCINMGTVGFLTEFNKDEIFSAIDSIICGSYKVEKRTKLMGFAKLSDGKQHILNDSLNEVVITTKNPAKMMHFEVYIDGSLVEDVRADGIIVSTPNGSTAYSLSSGGPIIEPTVEGFVIVPICPFKLSSRPLVVNANSEIKIKLLKKSTYVVIDGNTEFEAKKGDEIILRKSESNAYFVKGDNFYNKLKKLSLM.

Residues 1 to 283 form an NADP phosphatase region; sequence MDMLEMALNI…KLVGIFGNRW (283 aa). 5 residues coordinate Mg(2+): Glu-66, Asp-85, Val-87, Asp-88, and Asp-229. Residues 275 to 566 are NAD kinase; sequence LVGIFGNRWR…YNKLKKLSLM (292 aa). Residue Asp-355 is the Proton acceptor of the active site. Residues 355-356, Arg-360, 430-431, Lys-441, Arg-458, Asp-460, 471-476, and Asn-528 each bind NAD(+); these read DG, NE, and TAYSLS.

In the N-terminal section; belongs to the inositol monophosphatase superfamily. It in the C-terminal section; belongs to the NAD kinase family. As to quaternary structure, homotetramer. Requires Mg(2+) as cofactor.

It localises to the cytoplasm. It carries out the reaction NAD(+) + ATP = ADP + NADP(+) + H(+). It catalyses the reaction NADP(+) + H2O = phosphate + NAD(+). Functionally, involved in the regulation of the intracellular balance between NAD(H) and NADP(H), and is a key enzyme in the biosynthesis of NADP. Catalyzes the phosphorylation and dephosphorylation of NAD and NADP, respectively. Although it shows conflicting dual activities and is able to supply NADP, it seems that its physiological role is to prevent excess accumulation of NADP. The sequence is that of Bifunctional NADP phosphatase/NAD kinase from Methanococcus maripaludis (strain DSM 14266 / JCM 13030 / NBRC 101832 / S2 / LL).